We begin with the raw amino-acid sequence, 169 residues long: Peptide deformylase 1 (169 aa).

The Fe cation site is built by C92 and H134. Residue E135 is part of the active site. H138 provides a ligand contact to Fe cation.

This sequence belongs to the polypeptide deformylase family. It depends on Fe(2+) as a cofactor.

The catalysed reaction is N-terminal N-formyl-L-methionyl-[peptide] + H2O = N-terminal L-methionyl-[peptide] + formate. In terms of biological role, removes the formyl group from the N-terminal Met of newly synthesized proteins. Requires at least a dipeptide for an efficient rate of reaction. N-terminal L-methionine is a prerequisite for activity but the enzyme has broad specificity at other positions. The polypeptide is Peptide deformylase 1 (Ralstonia nicotianae (strain ATCC BAA-1114 / GMI1000) (Ralstonia solanacearum)).